The chain runs to 453 residues: Cytochrome b-c1 complex subunit 2, mitochondrial (453 aa).

A mitochondrion-targeting transit peptide spans 1-14 (MKLLSRAGSFSRFY). 3 positions are modified to N6-acetyllysine: Lys66, Lys199, and Lys250. The residue at position 368 (Ser368) is a Phosphoserine.

This sequence belongs to the peptidase M16 family. UQCRC2/QCR2 subfamily. As to quaternary structure, component of the ubiquinol-cytochrome c oxidoreductase (cytochrome b-c1 complex, complex III, CIII), a multisubunit enzyme composed of 11 subunits. The complex is composed of 3 respiratory subunits cytochrome b, cytochrome c1 and Rieske protein UQCRFS1, 2 core protein subunits UQCRC1/QCR1 and UQCRC2/QCR2, and 6 low-molecular weight protein subunits UQCRH/QCR6, UQCRB/QCR7, UQCRQ/QCR8, UQCR10/QCR9, UQCR11/QCR10 and subunit 9, the cleavage product of Rieske protein UQCRFS1. The complex exists as an obligatory dimer and forms supercomplexes (SCs) in the inner mitochondrial membrane with NADH-ubiquinone oxidoreductase (complex I, CI) and cytochrome c oxidase (complex IV, CIV), resulting in different assemblies (supercomplex SCI(1)III(2)IV(1) and megacomplex MCI(2)III(2)IV(2)). Interacts with RAB5IF. Interacts with STMP1. Acetylation of Lys-159 and Lys-250 is observed in liver mitochondria from fasted mice but not from fed mice. In terms of tissue distribution, expressed in neurons and astrocytes of the cerebral cortex and hippocampus (at protein level).

Its subcellular location is the mitochondrion inner membrane. In terms of biological role, component of the ubiquinol-cytochrome c oxidoreductase, a multisubunit transmembrane complex that is part of the mitochondrial electron transport chain which drives oxidative phosphorylation. The respiratory chain contains 3 multisubunit complexes succinate dehydrogenase (complex II, CII), ubiquinol-cytochrome c oxidoreductase (cytochrome b-c1 complex, complex III, CIII) and cytochrome c oxidase (complex IV, CIV), that cooperate to transfer electrons derived from NADH and succinate to molecular oxygen, creating an electrochemical gradient over the inner membrane that drives transmembrane transport and the ATP synthase. The cytochrome b-c1 complex catalyzes electron transfer from ubiquinol to cytochrome c, linking this redox reaction to translocation of protons across the mitochondrial inner membrane, with protons being carried across the membrane as hydrogens on the quinol. In the process called Q cycle, 2 protons are consumed from the matrix, 4 protons are released into the intermembrane space and 2 electrons are passed to cytochrome c. The 2 core subunits UQCRC1/QCR1 and UQCRC2/QCR2 are homologous to the 2 mitochondrial-processing peptidase (MPP) subunits beta-MPP and alpha-MPP respectively, and they seem to have preserved their MPP processing properties. May be involved in the in situ processing of UQCRFS1 into the mature Rieske protein and its mitochondrial targeting sequence (MTS)/subunit 9 when incorporated into complex III. This chain is Cytochrome b-c1 complex subunit 2, mitochondrial (Uqcrc2), found in Mus musculus (Mouse).